The primary structure comprises 221 residues: Ribosomal RNA large subunit methyltransferase E (221 aa).

The S-adenosyl-L-methionine site is built by Gly-72, Trp-74, Asp-91, Asp-107, and Asp-131. Lys-171 (proton acceptor) is an active-site residue.

Belongs to the class I-like SAM-binding methyltransferase superfamily. RNA methyltransferase RlmE family.

Its subcellular location is the cytoplasm. It catalyses the reaction uridine(2552) in 23S rRNA + S-adenosyl-L-methionine = 2'-O-methyluridine(2552) in 23S rRNA + S-adenosyl-L-homocysteine + H(+). In terms of biological role, specifically methylates the uridine in position 2552 of 23S rRNA at the 2'-O position of the ribose in the fully assembled 50S ribosomal subunit. This is Ribosomal RNA large subunit methyltransferase E from Zymomonas mobilis subsp. mobilis (strain ATCC 31821 / ZM4 / CP4).